The sequence spans 246 residues: Phosphate import ATP-binding protein PstB (246 aa).

In terms of domain architecture, ABC transporter spans 3 to 241; the sequence is AKTTNLNLFY…PKQEKTKAYL (239 aa). 35–42 is a binding site for ATP; that stretch reads GASGCGKS.

This sequence belongs to the ABC transporter superfamily. Phosphate importer (TC 3.A.1.7) family. In terms of assembly, the complex is composed of two ATP-binding proteins (PstB), two transmembrane proteins (PstC and PstA) and a solute-binding protein (PstS).

The protein resides in the cell inner membrane. It catalyses the reaction phosphate(out) + ATP + H2O = ADP + 2 phosphate(in) + H(+). In terms of biological role, part of the ABC transporter complex PstSACB involved in phosphate import. Responsible for energy coupling to the transport system. The chain is Phosphate import ATP-binding protein PstB from Campylobacter jejuni subsp. jejuni serotype O:2 (strain ATCC 700819 / NCTC 11168).